A 534-amino-acid polypeptide reads, in one-letter code: CTP synthase (534 aa).

The tract at residues 1 to 267 (MSKYIVVTGG…GSYILNRLNI (267 aa)) is amidoligase domain. Position 13 (S13) interacts with CTP. Residue S13 participates in UTP binding. Residue 14 to 19 (SIGKGI) participates in ATP binding. Y54 lines the L-glutamine pocket. D71 provides a ligand contact to ATP. Residues D71 and E141 each coordinate Mg(2+). CTP-binding positions include 148-150 (DIE), 188-193 (KTKPTQ), and K224. UTP is bound by residues 188–193 (KTKPTQ) and K224. A Glutamine amidotransferase type-1 domain is found at 294-532 (KIAVVGKYIE…IKAAKNKKQN (239 aa)). Residue G353 coordinates L-glutamine. C380 (nucleophile; for glutamine hydrolysis) is an active-site residue. L-glutamine is bound by residues 381–384 (LGLH), E403, and R460. Residues H505 and E507 contribute to the active site.

The protein belongs to the CTP synthase family. In terms of assembly, homotetramer.

It catalyses the reaction UTP + L-glutamine + ATP + H2O = CTP + L-glutamate + ADP + phosphate + 2 H(+). The catalysed reaction is L-glutamine + H2O = L-glutamate + NH4(+). The enzyme catalyses UTP + NH4(+) + ATP = CTP + ADP + phosphate + 2 H(+). It functions in the pathway pyrimidine metabolism; CTP biosynthesis via de novo pathway; CTP from UDP: step 2/2. Allosterically activated by GTP, when glutamine is the substrate; GTP has no effect on the reaction when ammonia is the substrate. The allosteric effector GTP functions by stabilizing the protein conformation that binds the tetrahedral intermediate(s) formed during glutamine hydrolysis. Inhibited by the product CTP, via allosteric rather than competitive inhibition. Functionally, catalyzes the ATP-dependent amination of UTP to CTP with either L-glutamine or ammonia as the source of nitrogen. Regulates intracellular CTP levels through interactions with the four ribonucleotide triphosphates. The sequence is that of CTP synthase from Methanosphaera stadtmanae (strain ATCC 43021 / DSM 3091 / JCM 11832 / MCB-3).